The primary structure comprises 124 residues: Large ribosomal subunit protein bL12 (124 aa).

Positions 99–124 (KEGMNKEDAEKAKADLEAAGAKVELK) are disordered. Residues 101–114 (GMNKEDAEKAKADL) show a composition bias toward basic and acidic residues. The span at 115–124 (EAAGAKVELK) shows a compositional bias: low complexity.

The protein belongs to the bacterial ribosomal protein bL12 family. As to quaternary structure, homodimer. Part of the ribosomal stalk of the 50S ribosomal subunit. Forms a multimeric L10(L12)X complex, where L10 forms an elongated spine to which 2 to 4 L12 dimers bind in a sequential fashion. Binds GTP-bound translation factors.

In terms of biological role, forms part of the ribosomal stalk which helps the ribosome interact with GTP-bound translation factors. Is thus essential for accurate translation. In Campylobacter hominis (strain ATCC BAA-381 / DSM 21671 / CCUG 45161 / LMG 19568 / NCTC 13146 / CH001A), this protein is Large ribosomal subunit protein bL12.